The following is a 604-amino-acid chain: Elongation factor 4 (604 aa).

In terms of domain architecture, tr-type G spans 7–190 (SRLRNFCIIA…IVDRVPAPPD (184 aa)). GTP contacts are provided by residues 19-24 (DHGKST) and 136-139 (NKID).

It belongs to the TRAFAC class translation factor GTPase superfamily. Classic translation factor GTPase family. LepA subfamily.

The protein resides in the cell inner membrane. It carries out the reaction GTP + H2O = GDP + phosphate + H(+). Functionally, required for accurate and efficient protein synthesis under certain stress conditions. May act as a fidelity factor of the translation reaction, by catalyzing a one-codon backward translocation of tRNAs on improperly translocated ribosomes. Back-translocation proceeds from a post-translocation (POST) complex to a pre-translocation (PRE) complex, thus giving elongation factor G a second chance to translocate the tRNAs correctly. Binds to ribosomes in a GTP-dependent manner. This Synechococcus sp. (strain RCC307) protein is Elongation factor 4.